The primary structure comprises 316 residues: Conjugated bile acid hydrolase (316 aa).

Cysteine 2 serves as the catalytic Nucleophile. 2 residues coordinate deoxycholate: cysteine 2 and arginine 18. Asparagine 81 provides a ligand contact to taurine.

This sequence belongs to the peptidase C59 family.

It catalyses the reaction cholate + taurine = taurocholate + H2O. It carries out the reaction taurodeoxycholate + H2O = deoxycholate + taurine. The enzyme catalyses taurochenodeoxycholate + H2O = chenodeoxycholate + taurine. The catalysed reaction is glycocholate + H2O = cholate + glycine. It participates in lipid metabolism; bile acid biosynthesis. Glycocholate hydrolysis is inhibited by various previously identified BSH inhibitors, including KIO(3), NaHIO(3), NaIO(4), CuCl(2), menadione, riboflavin, gossypetin, and the antibiotics oxytetracycline, demeclocycline hydrochloride and methacycline hydrochloride. Functionally, bile salt hydrolase that catalyzes the deconjugation of glycine- and taurine-linked bile salts, which occurs naturally in the intestines of animals, releasing amino acid residues and deconjugated bile salts (bile acids). Can hydrolyze the amide bond in the bile salts taurocholate (TCA), taurodeoxycholate (TDCA), taurochenodeoxycholate (TCDCA), taurohyodeoxycholate (THDCA) and tauroursodeoxycholate (TUDCA). Oh et al. did not detect activity with the glycine-conjugated bile salts glycocholate (GCA), glycodeoxycholate (GDCA) and glycochenodeoxycholate (GCDCA). However, a later study shows activity toward glycocholate (GCA). The chain is Conjugated bile acid hydrolase from Lactobacillus acidophilus.